We begin with the raw amino-acid sequence, 284 residues long: Bifunctional protein FolD (284 aa).

Residues 166 to 168 (GAS), Ser-191, and Ile-232 each bind NADP(+).

This sequence belongs to the tetrahydrofolate dehydrogenase/cyclohydrolase family. Homodimer.

The catalysed reaction is (6R)-5,10-methylene-5,6,7,8-tetrahydrofolate + NADP(+) = (6R)-5,10-methenyltetrahydrofolate + NADPH. It catalyses the reaction (6R)-5,10-methenyltetrahydrofolate + H2O = (6R)-10-formyltetrahydrofolate + H(+). The protein operates within one-carbon metabolism; tetrahydrofolate interconversion. In terms of biological role, catalyzes the oxidation of 5,10-methylenetetrahydrofolate to 5,10-methenyltetrahydrofolate and then the hydrolysis of 5,10-methenyltetrahydrofolate to 10-formyltetrahydrofolate. The polypeptide is Bifunctional protein FolD (Thiobacillus denitrificans (strain ATCC 25259 / T1)).